Here is a 293-residue protein sequence, read N- to C-terminus: Nitrogenase iron protein (293 aa).

Residue 10-17 (GKGGIGKS) participates in ATP binding. C98 lines the [4Fe-4S] cluster pocket. The residue at position 101 (R101) is an ADP-ribosylarginine; by dinitrogenase reductase ADP-ribosyltransferase. C133 provides a ligand contact to [4Fe-4S] cluster.

The protein belongs to the NifH/BchL/ChlL family. Homodimer. It depends on [4Fe-4S] cluster as a cofactor. In terms of processing, the reversible ADP-ribosylation of Arg-101 inactivates the nitrogenase reductase and regulates nitrogenase activity.

The enzyme catalyses N2 + 8 reduced [2Fe-2S]-[ferredoxin] + 16 ATP + 16 H2O = H2 + 8 oxidized [2Fe-2S]-[ferredoxin] + 2 NH4(+) + 16 ADP + 16 phosphate + 6 H(+). In terms of biological role, the key enzymatic reactions in nitrogen fixation are catalyzed by the nitrogenase complex, which has 2 components: the iron protein and the molybdenum-iron protein. This Stutzerimonas stutzeri (strain A1501) (Pseudomonas stutzeri) protein is Nitrogenase iron protein.